We begin with the raw amino-acid sequence, 290 residues long: Phosphoribosylaminoimidazole-succinocarboxamide synthase (290 aa).

This sequence belongs to the SAICAR synthetase family.

It carries out the reaction 5-amino-1-(5-phospho-D-ribosyl)imidazole-4-carboxylate + L-aspartate + ATP = (2S)-2-[5-amino-1-(5-phospho-beta-D-ribosyl)imidazole-4-carboxamido]succinate + ADP + phosphate + 2 H(+). It functions in the pathway purine metabolism; IMP biosynthesis via de novo pathway; 5-amino-1-(5-phospho-D-ribosyl)imidazole-4-carboxamide from 5-amino-1-(5-phospho-D-ribosyl)imidazole-4-carboxylate: step 1/2. The chain is Phosphoribosylaminoimidazole-succinocarboxamide synthase from Haemophilus influenzae (strain PittEE).